An 88-amino-acid chain; its full sequence is Small ribosomal subunit protein uS15 (88 aa).

This sequence belongs to the universal ribosomal protein uS15 family. Part of the 30S ribosomal subunit. Forms a bridge to the 50S subunit in the 70S ribosome, contacting the 23S rRNA.

Its function is as follows. One of the primary rRNA binding proteins, it binds directly to 16S rRNA where it helps nucleate assembly of the platform of the 30S subunit by binding and bridging several RNA helices of the 16S rRNA. Functionally, forms an intersubunit bridge (bridge B4) with the 23S rRNA of the 50S subunit in the ribosome. This Leptospira interrogans serogroup Icterohaemorrhagiae serovar copenhageni (strain Fiocruz L1-130) protein is Small ribosomal subunit protein uS15.